The sequence spans 406 residues: Odorant receptor 42a (406 aa).

The Cytoplasmic portion of the chain corresponds to 1–44 (MDLRRWFPTLYTQSKDSPVRSRDATLYLLRCVFLMGVRKPPAKF). Residues 45-65 (FVAYVLWSFALNFCSTFYQPI) form a helical membrane-spanning segment. The Extracellular segment spans residues 66–86 (GFLTGYISHLSEFSPGEFLTS). Residues 87–107 (LQVAFNAWSCSTKVLIVWALV) traverse the membrane as a helical segment. At 108-142 (KRFDEANNLLDEMDRRITDPGERLQIHRAVSLSNR) the chain is on the cytoplasmic side. Residues 143–163 (IFFFFMAVYMVYATNTFLSAI) form a helical membrane-spanning segment. Topologically, residues 164-181 (FIGRPPYQNYYPFLDWRS) are extracellular. Residues 182–202 (STLHLALQAGLEYFAMAGACF) traverse the membrane as a helical segment. Residues 203–271 (QDVCVDCYPV…DCLRPVISGT (69 aa)) are Cytoplasmic-facing. The chain crosses the membrane as a helical span at residues 272–292 (IFVQFLVVGLVLGFTLINIVL). Topologically, residues 293–298 (FANLGS) are extracellular. Residues 299–319 (AIAALSFMAAVLLETTPFCIL) traverse the membrane as a helical segment. The Cytoplasmic segment spans residues 320–359 (CNYLTEDCYKLADALFQSNWIDEEKRYQKTLMYFLQKLQQ). Residues 360 to 380 (PITFMAMNVFPISVGTNISVT) traverse the membrane as a helical segment. Topologically, residues 381–406 (KFSFSVFTLVKQMNISEKLAKSEMEE) are extracellular. A glycan (N-linked (GlcNAc...) asparagine) is linked at Asn-394.

This sequence belongs to the insect chemoreceptor superfamily. Heteromeric odorant receptor channel (TC 1.A.69) family. Or2a subfamily. In terms of assembly, interacts with Orco. Complexes exist early in the endomembrane system in olfactory sensory neurons (OSNs), coupling these complexes to the conserved ciliary trafficking pathway.

The protein resides in the cell membrane. Its function is as follows. Odorant receptor which mediates acceptance or avoidance behavior, depending on its substrates. The odorant receptor repertoire encodes a large collection of odor stimuli that vary widely in identity, intensity, and duration. May form a complex with Orco to form odorant-sensing units, providing sensitive and prolonged odorant signaling and calcium permeability. Involved in the behavioral responses to butanol, ethyl acetate, propyl acetate, and pentyl acetate. Also responds to pyrazines. The sequence is that of Odorant receptor 42a (Or42a) from Drosophila melanogaster (Fruit fly).